The following is a 5538-amino-acid chain: Leashin (5538 aa).

The segment covering M1–R10 has biased composition (gly residues). Disordered stretches follow at residues M1–G270, E286–I315, L331–H365, S510–S555, T596–Q712, A800–G901, A913–T944, N1027–F1145, V1164–D1297, P1310–S1398, E1432–E1993, S2067–F2146, N2165–A2207, P2233–I3065, M3077–S3894, E3910–L4034, K4072–L4128, E4238–A4421, P4442–D4463, L4509–T4698, K4733–A4850, and A4910–R5052. Residues M1–R1100 form a woronin bodies-binding region region. Positions S14 to S23 are enriched in low complexity. 2 stretches are compositionally biased toward basic and acidic residues: residues S42–L51 and V89–R167. The span at A299–F313 shows a compositional bias: polar residues. Pro residues predominate over residues P334–P352. Residues P514–R523 show a composition bias toward basic residues. Positions S598 to T607 are enriched in polar residues. Basic residues predominate over residues H639 to S655. The segment covering A660 to A674 has biased composition (low complexity). Over residues S682–K698 the composition is skewed to basic residues. Basic and acidic residues predominate over residues R809–D825. Low complexity-rich tracts occupy residues G842–S851 and G862–W880. The segment covering G881–A891 has biased composition (basic residues). Basic and acidic residues-rich tracts occupy residues L1068 to R1091, I1098 to F1145, S1178 to E1198, S1207 to E1226, W1356 to E1365, S1375 to P1387, G1447 to S1462, and E1478 to E1488. Over residues Q1506–S1516 the composition is skewed to low complexity. Basic and acidic residues-rich tracts occupy residues V1521–R1536, G1549–A1559, and E1572–S1594. Basic residues predominate over residues K1639–K1648. Composition is skewed to basic and acidic residues over residues E1672–A1686, E1700–E1773, and K1788–E1800. Composition is skewed to low complexity over residues P1867–A1876 and S1889–L1898. Over residues K1950–E1975 the composition is skewed to basic and acidic residues. 2 stretches are compositionally biased toward polar residues: residues K1984 to E1993 and T2121 to S2130. 3 stretches are compositionally biased toward basic and acidic residues: residues D2187–A2196, V2269–V2279, and G2307–N2320. A compositionally biased stretch (polar residues) spans A2321–Q2331. The span at A2344–R2355 shows a compositional bias: basic residues. Polar residues predominate over residues M2358–D2370. Residues D2427–L2441 show a composition bias toward basic and acidic residues. The span at A2449–T2461 shows a compositional bias: low complexity. Basic residues predominate over residues K2473–K2484. Over residues D2494–P2525 the composition is skewed to polar residues. Basic and acidic residues-rich tracts occupy residues N2580 to E2590, P2647 to S2661, and A2677 to E2691. Positions E2719 to R2734 are enriched in low complexity. The span at K2735–K2747 shows a compositional bias: basic residues. Over residues D2796–T2812 the composition is skewed to basic and acidic residues. Basic residues predominate over residues K2874–K2884. Over residues T2885–E2894 the composition is skewed to polar residues. Composition is skewed to basic residues over residues K3003–Q3013 and K3089–Q3100. The span at A3145–P3172 shows a compositional bias: basic and acidic residues. Over residues P3248–E3268 the composition is skewed to low complexity. A compositionally biased stretch (polar residues) spans E3293–T3303. Over residues S3329–Q3341 the composition is skewed to basic residues. Residues D3347–P3367 show a composition bias toward basic and acidic residues. Composition is skewed to low complexity over residues T3397–S3409 and E3422–A3435. A compositionally biased stretch (basic residues) spans K3436–S3450. Residues E3480–S3495 show a composition bias toward basic and acidic residues. Over residues E3547–A3564 the composition is skewed to low complexity. 2 stretches are compositionally biased toward polar residues: residues S3565 to E3580 and V3604 to G3613. Basic residues-rich tracts occupy residues K3642–R3652 and K3716–S3730. A compositionally biased stretch (polar residues) spans T3768–S3787. Residues K3800–W3819 show a composition bias toward basic and acidic residues. Residues M3823–D3837 are compositionally biased toward polar residues. Residues D3876–V3893 show a composition bias toward basic and acidic residues. Composition is skewed to polar residues over residues I3915 to V3925 and K3965 to K3980. Acidic residues predominate over residues T4010 to Q4020. Basic and acidic residues predominate over residues E4111–A4123. Over residues K4244–K4255 the composition is skewed to basic residues. Over residues L4328–E4345 the composition is skewed to polar residues. Basic residues predominate over residues K4378 to S4391. Over residues A4392–N4406 the composition is skewed to basic and acidic residues. The interval A4495 to I5538 is septal pore-binding region. Residues T4554–A4570 show a composition bias toward polar residues. Basic and acidic residues-rich tracts occupy residues I4574–K4591 and E4660–P4673. Residues S4940–V4954 show a composition bias toward low complexity. Over residues R4966 to A4988 the composition is skewed to polar residues. The span at T4989–S4998 shows a compositional bias: pro residues. Positions H5050–D5223 form a coiled coil.

Binds directly or indirectly to the Woronin body major protein hexA.

It localises to the cell septum. Acts as the tether and is essential for anchoring of Woronin bodies at the septal pore. In damaged hyphae, Woronin bodies occlude septal pores in order to separate intact from damaged compartments. The protein is Leashin of Aspergillus fumigatus (strain ATCC MYA-4609 / CBS 101355 / FGSC A1100 / Af293) (Neosartorya fumigata).